Consider the following 266-residue polypeptide: uncharacterized protein (266 aa).

An N-terminal signal peptide occupies residues 1-22 (MGYFKRVVLYIIVMVVSVFIIG). Residue Cys23 is the site of N-palmitoyl cysteine attachment. Cys23 carries the S-diacylglycerol cysteine lipid modification.

Belongs to the staphylococcal tandem lipoprotein family.

The protein localises to the cell membrane. This is an uncharacterized protein from Staphylococcus aureus (strain N315).